Reading from the N-terminus, the 229-residue chain is Large ribosomal subunit protein uL1 (229 aa).

This sequence belongs to the universal ribosomal protein uL1 family. In terms of assembly, part of the 50S ribosomal subunit.

In terms of biological role, binds directly to 23S rRNA. The L1 stalk is quite mobile in the ribosome, and is involved in E site tRNA release. Its function is as follows. Protein L1 is also a translational repressor protein, it controls the translation of the L11 operon by binding to its mRNA. This Streptococcus equi subsp. zooepidemicus (strain MGCS10565) protein is Large ribosomal subunit protein uL1.